A 382-amino-acid polypeptide reads, in one-letter code: Anthranilate O-methyltransferase 1 (382 aa).

Tyr-20 provides a ligand contact to S-adenosyl-L-homocysteine. Gln-27 is an anthranilate binding site. Positions 61, 66, 102, 103, 146, and 147 each coordinate S-adenosyl-L-homocysteine. Residue Trp-168 coordinates anthranilate. Residues Glu-268 and Phe-270 each contribute to the Mg(2+) site.

This sequence belongs to the methyltransferase superfamily. Type-7 methyltransferase family. SABATH subfamily.

The catalysed reaction is anthranilate + S-adenosyl-L-methionine = O-methyl anthranilate + S-adenosyl-L-homocysteine. In terms of biological role, methyltransferase involved in the biosynthesis of methyl anthranilate in response to stresses. Utilizes anthranilic acid as substrate, but not salicylic acid. Produces exclusively the O-methyl ester. The chain is Anthranilate O-methyltransferase 1 (AAMT1) from Zea mays (Maize).